The sequence spans 153 residues: MLAFNFFGATEGGLFDINATLPLMAIQVVALTYILNSLFFKPVGNVVEKREKFVSNNVIEAKNKLSEVKKLEADLLTQLQSARTEAQRIVSEAEDESDKLYKEALELANNEANASKEKARLEIESQTSAARDQLSKQADVLSELIVNRLILEK.

Residues 23–40 (LMAIQVVALTYILNSLFF) traverse the membrane as a helical segment.

It belongs to the ATPase B chain family. F-type ATPases have 2 components, F(1) - the catalytic core - and F(0) - the membrane proton channel. F(1) has five subunits: alpha(3), beta(3), gamma(1), delta(1), epsilon(1). F(0) has four main subunits: a(1), b(1), b'(1) and c(10-14). The alpha and beta chains form an alternating ring which encloses part of the gamma chain. F(1) is attached to F(0) by a central stalk formed by the gamma and epsilon chains, while a peripheral stalk is formed by the delta, b and b' chains.

It localises to the cellular thylakoid membrane. Its function is as follows. F(1)F(0) ATP synthase produces ATP from ADP in the presence of a proton or sodium gradient. F-type ATPases consist of two structural domains, F(1) containing the extramembraneous catalytic core and F(0) containing the membrane proton channel, linked together by a central stalk and a peripheral stalk. During catalysis, ATP synthesis in the catalytic domain of F(1) is coupled via a rotary mechanism of the central stalk subunits to proton translocation. In terms of biological role, component of the F(0) channel, it forms part of the peripheral stalk, linking F(1) to F(0). The b'-subunit is a diverged and duplicated form of b found in plants and photosynthetic bacteria. The sequence is that of ATP synthase subunit b' from Prochlorococcus marinus (strain MIT 9301).